Reading from the N-terminus, the 208-residue chain is Uracil phosphoribosyltransferase (208 aa).

5-phospho-alpha-D-ribose 1-diphosphate contacts are provided by residues R78, R103, and 130 to 138 (DPMLATGGS). Uracil is bound by residues I193 and 198 to 200 (GDA). A 5-phospho-alpha-D-ribose 1-diphosphate-binding site is contributed by D199.

Belongs to the UPRTase family. Mg(2+) serves as cofactor.

The catalysed reaction is UMP + diphosphate = 5-phospho-alpha-D-ribose 1-diphosphate + uracil. The protein operates within pyrimidine metabolism; UMP biosynthesis via salvage pathway; UMP from uracil: step 1/1. Allosterically activated by GTP. Its function is as follows. Catalyzes the conversion of uracil and 5-phospho-alpha-D-ribose 1-diphosphate (PRPP) to UMP and diphosphate. This is Uracil phosphoribosyltransferase from Shewanella baltica (strain OS223).